Consider the following 451-residue polypeptide: NAC domain containing protein 52 (451 aa).

Positions 1-21 (MGRESVAVVTAPPSATAPGTA) are disordered. The NAC domain occupies 27 to 178 (LAPGFRFHPT…AYVLCRVFHK (152 aa)). Residues 126 to 184 (LGMKKTLVFHSGRAPDGLRTNWVMHEYRLVEYETEKNGNLVQDAYVLCRVFHKNNIGPP) mediate DNA binding. 2 disordered regions span residues 255 to 337 (DQQN…TTTT) and 370 to 400 (KKEK…KVND). Residues 256 to 270 (QQNHHENDLKPEEHN) are compositionally biased toward basic and acidic residues. Residues 272-292 (NNNYDENEETLKREQMEEEER) adopt a coiled-coil conformation. The segment covering 318–337 (ESNNNSSRNTQDHCSSTTTT) has biased composition (low complexity). Residues 370-384 (KKEKPQQPLRPHKEP) are compositionally biased toward basic and acidic residues. The stretch at 398–446 (VNDLQKEIHQMSVERETFKLEMMSAEAMISILQSRIDALRQENEELKKN) forms a coiled coil.

Interacts with JMJ14 and NAC050. As to expression, mostly expressed in floral organs, and, at low levels, in other organs.

The protein localises to the nucleus. Transcriptional repressor that binds to the motif 5'-(C/T)A(C/A)G-3' in the promoter of target genes. Also binds to the 5'-CTTGNNNNNCAAG-3' consensus sequence in chromatin. Can bind to the mitochondrial dysfunction motif (MDM) present in the upstream regions of mitochondrial dysfunction stimulon (MDS) genes involved in mitochondrial retrograde regulation (MRR). Together with NAC050 and JMJ14, regulates gene expression and flowering time by associating with the histone demethylase JMJ14, probably by the promotion of RNA-mediated gene silencing. Regulates siRNA-dependent post-transcriptional gene silencing (PTGS) through SGS3 expression modulation. Required during pollen development. The sequence is that of NAC domain containing protein 52 from Arabidopsis thaliana (Mouse-ear cress).